The sequence spans 786 residues: DNA double-strand break repair Rad50 ATPase (786 aa).

Residues K13, 33–39 (NGSGKTT), and Q138 each bind ATP. 3 coiled-coil regions span residues 194-249 (LKAE…LKSI), 337-455 (EKAK…RALE), and 551-650 (ALER…VKAL). One can recognise a Zinc-hook domain in the interval 366 to 459 (EIAELQNKIN…KIRALEKYKG (94 aa)). Residues C411 and C414 each contribute to the Zn(2+) site.

The protein belongs to the SMC family. RAD50 subfamily. In terms of assembly, homodimer. Forms a heterotetramer composed of two Mre11 subunits and two Rad50 subunits. Zn(2+) serves as cofactor.

Its function is as follows. Part of the Rad50/Mre11 complex, which is involved in the early steps of DNA double-strand break (DSB) repair. The complex may facilitate opening of the processed DNA ends to aid in the recruitment of HerA and NurA. Rad50 controls the balance between DNA end bridging and DNA resection via ATP-dependent structural rearrangements of the Rad50/Mre11 complex. This Nanoarchaeum equitans (strain Kin4-M) protein is DNA double-strand break repair Rad50 ATPase.